Consider the following 368-residue polypeptide: MASAVISVPTTASRFALLQVDSDSDSDSDVGKPKAAGRGAGKPRSGKSPSGKNSQNNEKKKEKRRRKKEQQQSEANELRSLAFKKIPQKSTAPPSLTLQDLANDLINPANVQQGSKPQENWQEWKQRDEQLTSDLYEADLEKALMLSKLEFEEHKKDADKAETASPKTKTGGKKDRKKNQQGKDKRVTVSLKDFQQEDQLKNKPEREPVNPALRDDKFFNKLEDDVSKIVQRDKRREQYSNSAGQEVNTSSEHEQDVRTEQLKYELEKKDQEIAKLKKTISQWEERYKEVKARNSQLLKMLQQGEMKDKAEILLQVEELLNIKEELSSQVTQLHTALEQERSKVKGLQSEQPKHQGNRKGKKASEGDV.

Disordered stretches follow at residues 18–127 (LQVD…WKQR), 152–260 (EEHK…VRTE), and 333–368 (LHTA…EGDV). Low complexity predominate over residues 33–56 (PKAAGRGAGKPRSGKSPSGKNSQN). A coiled-coil region spans residues 52–82 (KNSQNNEKKKEKRRRKKEQQQSEANELRSLA). Polar residues-rich tracts occupy residues 88 to 100 (QKST…TLQD) and 109 to 121 (ANVQ…QENW). Over residues 152–162 (EEHKKDADKAE) the composition is skewed to basic and acidic residues. Positions 170–180 (TGGKKDRKKNQ) are enriched in basic residues. Residues 194–238 (FQQEDQLKNKPEREPVNPALRDDKFFNKLEDDVSKIVQRDKRREQ) are compositionally biased toward basic and acidic residues. The segment covering 239-250 (YSNSAGQEVNTS) has biased composition (polar residues). Basic and acidic residues predominate over residues 251–260 (SEHEQDVRTE). The stretch at 256–350 (DVRTEQLKYE…RSKVKGLQSE (95 aa)) forms a coiled coil.

Belongs to the GKAP1 family.

It is found in the golgi apparatus. Its function is as follows. May play a role in the regulation of insulin-dependent IRS1 tyrosine phosphorylation in adipocytes. This Danio rerio (Zebrafish) protein is G kinase-anchoring protein 1 (gkap1).